A 250-amino-acid polypeptide reads, in one-letter code: Acetylglutamate kinase (250 aa).

Substrate is bound by residues 41–42 (GG), Arg-63, and Asn-156.

This sequence belongs to the acetylglutamate kinase family. ArgB subfamily.

It localises to the cytoplasm. The catalysed reaction is N-acetyl-L-glutamate + ATP = N-acetyl-L-glutamyl 5-phosphate + ADP. Its pathway is amino-acid biosynthesis; L-arginine biosynthesis; N(2)-acetyl-L-ornithine from L-glutamate: step 2/4. Functionally, catalyzes the ATP-dependent phosphorylation of N-acetyl-L-glutamate. This Listeria welshimeri serovar 6b (strain ATCC 35897 / DSM 20650 / CCUG 15529 / CIP 8149 / NCTC 11857 / SLCC 5334 / V8) protein is Acetylglutamate kinase.